The following is a 225-amino-acid chain: UPF0758 protein Shal_0429 (225 aa).

An MPN domain is found at 102 to 224 (ILSDPDLTRD…IVSFAERGWI (123 aa)). Zn(2+)-binding residues include histidine 173, histidine 175, and aspartate 186. The JAMM motif signature appears at 173-186 (HNHPSGIAEPSTAD).

Belongs to the UPF0758 family.

The chain is UPF0758 protein Shal_0429 from Shewanella halifaxensis (strain HAW-EB4).